A 284-amino-acid chain; its full sequence is Pantothenate synthetase (284 aa).

30 to 37 (MGNLHDGH) lines the ATP pocket. H37 functions as the Proton donor in the catalytic mechanism. (R)-pantoate is bound at residue Q61. Q61 serves as a coordination point for beta-alanine. 149–152 (GEKD) contacts ATP. (R)-pantoate is bound at residue Q155. Residues V178 and 186 to 189 (LSSR) contribute to the ATP site.

The protein belongs to the pantothenate synthetase family. Homodimer.

The protein localises to the cytoplasm. It carries out the reaction (R)-pantoate + beta-alanine + ATP = (R)-pantothenate + AMP + diphosphate + H(+). Its pathway is cofactor biosynthesis; (R)-pantothenate biosynthesis; (R)-pantothenate from (R)-pantoate and beta-alanine: step 1/1. In terms of biological role, catalyzes the condensation of pantoate with beta-alanine in an ATP-dependent reaction via a pantoyl-adenylate intermediate. This Klebsiella pneumoniae subsp. pneumoniae (strain ATCC 700721 / MGH 78578) protein is Pantothenate synthetase.